Reading from the N-terminus, the 567-residue chain is Methionine--tRNA ligase (567 aa).

A 'HIGH' region motif is present at residues 11–21 (PYVQTVPHLGN). The Zn(2+) site is built by C143, C146, C156, and C159. The 'KMSKS' region signature appears at 331–335 (KFSKS). K334 contacts ATP.

Belongs to the class-I aminoacyl-tRNA synthetase family. MetG type 1 subfamily. The cofactor is Zn(2+).

The protein localises to the cytoplasm. The enzyme catalyses tRNA(Met) + L-methionine + ATP = L-methionyl-tRNA(Met) + AMP + diphosphate. Functionally, is required not only for elongation of protein synthesis but also for the initiation of all mRNA translation through initiator tRNA(fMet) aminoacylation. The protein is Methionine--tRNA ligase of Pyrobaculum islandicum (strain DSM 4184 / JCM 9189 / GEO3).